Reading from the N-terminus, the 275-residue chain is MSAPCNCTHADSQSLTNTNKSFQHLSPELQKQYSDPQHPANLICELCRLFYDNNWVTGTGGGISIRDVEGSNPNLVYIAPSGVQKERIQPWEMFLVELPDEKLLQTPNDIPKELTKSYKYKPSACTPLFMSCYKMRDAGACIHTHSQNAVMITLLLEGQKEFKISHIEQIKALPKLKYNEETKKVEKIGSLEYYDTLTIPIIENTPHEEDLTDSLQEAIRNYPGTSAVLVRRHGIYVWGETVWKAKVYNEAIDYLLELAIKMRQTGIPLVKNTST.

Cys-125 lines the substrate pocket. Zn(2+)-binding residues include His-143 and His-145. The active-site Proton donor/acceptor is the Glu-168. His-233 lines the Zn(2+) pocket.

It belongs to the aldolase class II family. MtnB subfamily. It depends on Zn(2+) as a cofactor.

Its subcellular location is the cytoplasm. It carries out the reaction 5-(methylsulfanyl)-D-ribulose 1-phosphate = 5-methylsulfanyl-2,3-dioxopentyl phosphate + H2O. It functions in the pathway amino-acid biosynthesis; L-methionine biosynthesis via salvage pathway; L-methionine from S-methyl-5-thio-alpha-D-ribose 1-phosphate: step 2/6. Its function is as follows. Catalyzes the dehydration of methylthioribulose-1-phosphate (MTRu-1-P) into 2,3-diketo-5-methylthiopentyl-1-phosphate (DK-MTP-1-P). In Lodderomyces elongisporus (strain ATCC 11503 / CBS 2605 / JCM 1781 / NBRC 1676 / NRRL YB-4239) (Yeast), this protein is Methylthioribulose-1-phosphate dehydratase.